A 217-amino-acid chain; its full sequence is Transmembrane emp24 domain-containing protein p24delta6 (217 aa).

Residues 1–26 (MAISPVLFIGLIYLAGGGSLFPGVEA) form the signal peptide. The Lumenal portion of the chain corresponds to 27 to 186 (IWLTVPESGE…INEKTNTRVN (160 aa)). The GOLD domain maps to 36–152 (ERCVYEEIQA…IEGVELEIRR (117 aa)). Residues Asn-84 and Asn-116 are each glycosylated (N-linked (GlcNAc...) asparagine). Residues 138–160 (AKKEKIEGVELEIRRSTEYASAI) adopt a coiled-coil conformation. Omega-N-methylated arginine occurs at positions 170 and 175. A helical transmembrane segment spans residues 187–207 (QLGLMSLGVAIVVSISQVLYL). The Cytoplasmic segment spans residues 208–217 (KRYFLKKKLI). Positions 210 to 211 (YF) match the COPII vesicle coat-binding motif. The COPI vesicle coat-binding signature appears at 210 to 217 (YFLKKKLI).

Belongs to the EMP24/GP25L family. Probably oligomerizes with other members of the EMP24/GP25L family. Associates with the COPI vesicle coat (coatomer). Associates with the COPII vesicle coat (coatomer).

The protein resides in the endoplasmic reticulum membrane. In terms of biological role, involved in vesicular protein trafficking. Mainly functions in the early secretory pathway. Thought to act as cargo receptor at the lumenal side for incorporation of secretory cargo molecules into transport vesicles and to be involved in vesicle coat formation at the cytoplasmic side. This Arabidopsis thaliana (Mouse-ear cress) protein is Transmembrane emp24 domain-containing protein p24delta6.